A 117-amino-acid chain; its full sequence is Prefoldin subunit beta (117 aa).

This sequence belongs to the prefoldin subunit beta family. In terms of assembly, heterohexamer of two alpha and four beta subunits.

The protein localises to the cytoplasm. Functionally, molecular chaperone capable of stabilizing a range of proteins. Seems to fulfill an ATP-independent, HSP70-like function in archaeal de novo protein folding. The protein is Prefoldin subunit beta (pfdB) of Pyrococcus horikoshii (strain ATCC 700860 / DSM 12428 / JCM 9974 / NBRC 100139 / OT-3).